Consider the following 915-residue polypeptide: Protein translocase subunit SecA (915 aa).

ATP is bound by residues Gln-87, 105–109 (GEGKT), and Asp-516. The interval 866 to 915 (MTYGAPSDGDIGGSVEDEPLELPEGARVGRNDPCPCGSGKKYKQCHGKLS) is disordered. Zn(2+) is bound by residues Cys-899, Cys-901, Cys-910, and His-911. Basic residues predominate over residues 905-915 (KKYKQCHGKLS).

This sequence belongs to the SecA family. Monomer and homodimer. Part of the essential Sec protein translocation apparatus which comprises SecA, SecYEG and auxiliary proteins SecDF-YajC and YidC. The cofactor is Zn(2+).

It is found in the cell inner membrane. The protein localises to the cytoplasm. It carries out the reaction ATP + H2O + cellular proteinSide 1 = ADP + phosphate + cellular proteinSide 2.. Functionally, part of the Sec protein translocase complex. Interacts with the SecYEG preprotein conducting channel. Has a central role in coupling the hydrolysis of ATP to the transfer of proteins into and across the cell membrane, serving both as a receptor for the preprotein-SecB complex and as an ATP-driven molecular motor driving the stepwise translocation of polypeptide chains across the membrane. In Delftia acidovorans (strain DSM 14801 / SPH-1), this protein is Protein translocase subunit SecA.